A 1016-amino-acid polypeptide reads, in one-letter code: Enhancer of polycomb-like protein 1 (1016 aa).

Disordered stretches follow at residues 1-50 (MAIH…NDLE), 96-119 (LLGSQNEDGDKKKDDSDKKTDASV), 450-488 (KEEDEDKESSKIKRDKRSRFDSSREGSATSMPGSATIGT), 499-518 (GQVHHTQEASSSSQPYVKLP), and 842-1016 (ARMR…PNRK). Positions 35-50 (YKQSDLPTLNASNDLE) are enriched in polar residues. 2 stretches are compositionally biased toward basic and acidic residues: residues 103-116 (DGDKKKDDSDKKTD) and 457-473 (ESSKIKRDKRSRFDSSR). Polar residues predominate over residues 475–488 (GSATSMPGSATIGT). Over residues 842-883 (ARMRTLQQQQRNNKQQAAGQSSGSSSASLGSNTNSNSSISGQ) the composition is skewed to low complexity. Polar residues predominate over residues 884–902 (ADQGQTNLTNSGITRQGGA). A compositionally biased stretch (low complexity) spans 904 to 923 (VNGSQTSTTNNTRSSVSGGS). Polar residues predominate over residues 928 to 956 (LPTQSSQRSNTNSPLLASQPQGYSQQQKF). A compositionally biased stretch (low complexity) spans 960–971 (PPTSQSQSQSPT). Polar residues predominate over residues 976–994 (QLQTSKMYNKHGSNITPSN).

The protein belongs to the enhancer of polycomb family. In terms of assembly, component of the NuA4 histone acetyltransferase complex.

It is found in the nucleus. In terms of biological role, component of the NuA4 histone acetyltransferase complex which is involved in transcriptional activation of selected genes principally by acetylation of nucleosomal histone H4 and H2A. The NuA4 complex is also involved in DNA repair. Involved in gene silencing by neighboring heterochromatin, blockage of the silencing spreading along the chromosome, and required for cell cycle progression through G2/M. The polypeptide is Enhancer of polycomb-like protein 1 (EPL1) (Debaryomyces hansenii (strain ATCC 36239 / CBS 767 / BCRC 21394 / JCM 1990 / NBRC 0083 / IGC 2968) (Yeast)).